The sequence spans 271 residues: Insulin-like growth factor-binding protein 5 (271 aa).

A signal peptide spans 1 to 19 (MVISVVLLLLAAYAVPAQG). In terms of domain architecture, IGFBP N-terminal spans 22 to 102 (SFVHCEPCDE…LHGRGVCLNE (81 aa)). 6 disulfides stabilise this stretch: Cys-26-Cys-52, Cys-29-Cys-54, Cys-37-Cys-55, Cys-44-Cys-58, Cys-66-Cys-79, and Cys-73-Cys-99. A compositionally biased stretch (basic and acidic residues) spans 109-121 (TKIERDSREHEEP). The disordered stretch occupies residues 109 to 129 (TKIERDSREHEEPTTSEMAEE). Ser-115 bears the Phosphoserine mark. Positions 188–262 (QGPCRRHMEA…MEYVDGDFQC (75 aa)) constitute a Thyroglobulin type-1 domain. 3 disulfide bridges follow: Cys-191-Cys-218, Cys-229-Cys-240, and Cys-242-Cys-262.

Interacts with IGF1; this interaction enhances the growth stimulatory effects of IGF1 on fibroblasts. Interacts with CAV1; this interaction allows trafficking of IGFBP5 from the plasma membrane to the nucleus. Interacts with NCL; this interaction is necessary for IGFBP5 localization to the nucleus. Most abundant in kidney, uterus and gastrocnemius muscle.

The protein resides in the secreted. Its subcellular location is the cytoplasm. It is found in the nucleus. In terms of biological role, multifunctional protein that plays a critical role in regulating the availability of IGFs to their receptors and thereby regulates IGF-mediated cellular processes including proliferation, differentiation, and apoptosis in a cell-type specific manner. Increases the cell proliferation of osteoblasts, intestinal smooth muscle cells and neuroblastoma cells. Enhances adhesion and survival of epithelial cells but decreases adhesion of mesenchymal cells. Once secreted, acts as a major mediator of mTORC1-dependent feedback inhibition of IGF1 signaling. Also plays a role in the induction of extracellular matrix (ECM) production and deposition independently of its nuclear translocation and binding to IGFs. Acts itself as a growth factor that can act independently of IGFs to regulate bone formation. Acts as a ligand for the ROR1 receptor which triggers formation of ROR1/HER2 heterodimer to enhance CREB oncogenic signaling. In Mus musculus (Mouse), this protein is Insulin-like growth factor-binding protein 5 (Igfbp5).